Here is a 337-residue protein sequence, read N- to C-terminus: ATP-dependent 6-phosphofructokinase (337 aa).

Residue Gly-11 participates in ATP binding. ADP is bound at residue 21–25 (RAVVR). Residues 72 to 73 (RY) and 102 to 105 (GDGS) contribute to the ATP site. Asp-103 contributes to the Mg(2+) binding site. 125 to 127 (TID) is a binding site for substrate. Catalysis depends on Asp-127, which acts as the Proton acceptor. Arg-154 provides a ligand contact to ADP. Substrate-binding positions include Arg-162 and 169-171 (MGR). ADP contacts are provided by residues 185 to 187 (GAD), Lys-212, and 214 to 216 (KNH). Residues Glu-223, Arg-245, and 251–254 (HILR) each bind substrate.

It belongs to the phosphofructokinase type A (PFKA) family. ATP-dependent PFK group I subfamily. Prokaryotic clade 'B1' sub-subfamily. Homotetramer. It depends on Mg(2+) as a cofactor.

It localises to the cytoplasm. The enzyme catalyses beta-D-fructose 6-phosphate + ATP = beta-D-fructose 1,6-bisphosphate + ADP + H(+). It participates in carbohydrate degradation; glycolysis; D-glyceraldehyde 3-phosphate and glycerone phosphate from D-glucose: step 3/4. Its activity is regulated as follows. Allosterically activated by ADP and other diphosphonucleosides, and allosterically inhibited by phosphoenolpyruvate. Its function is as follows. Catalyzes the phosphorylation of D-fructose 6-phosphate to fructose 1,6-bisphosphate by ATP, the first committing step of glycolysis. The chain is ATP-dependent 6-phosphofructokinase from Streptococcus pyogenes serotype M1.